The chain runs to 248 residues: Ubiquinone/menaquinone biosynthesis C-methyltransferase UbiE (248 aa).

Positions 68 and 92 each coordinate S-adenosyl-L-methionine.

The protein belongs to the class I-like SAM-binding methyltransferase superfamily. MenG/UbiE family.

It carries out the reaction a 2-demethylmenaquinol + S-adenosyl-L-methionine = a menaquinol + S-adenosyl-L-homocysteine + H(+). The enzyme catalyses a 2-methoxy-6-(all-trans-polyprenyl)benzene-1,4-diol + S-adenosyl-L-methionine = a 5-methoxy-2-methyl-3-(all-trans-polyprenyl)benzene-1,4-diol + S-adenosyl-L-homocysteine + H(+). The protein operates within quinol/quinone metabolism; menaquinone biosynthesis; menaquinol from 1,4-dihydroxy-2-naphthoate: step 2/2. Its pathway is cofactor biosynthesis; ubiquinone biosynthesis. Functionally, methyltransferase required for the conversion of demethylmenaquinol (DMKH2) to menaquinol (MKH2) and the conversion of 2-polyprenyl-6-methoxy-1,4-benzoquinol (DDMQH2) to 2-polyprenyl-3-methyl-6-methoxy-1,4-benzoquinol (DMQH2). The protein is Ubiquinone/menaquinone biosynthesis C-methyltransferase UbiE of Rickettsia bellii (strain OSU 85-389).